A 679-amino-acid chain; its full sequence is Glycine--tRNA ligase beta subunit (679 aa).

This sequence belongs to the class-II aminoacyl-tRNA synthetase family. As to quaternary structure, tetramer of two alpha and two beta subunits.

Its subcellular location is the cytoplasm. It carries out the reaction tRNA(Gly) + glycine + ATP = glycyl-tRNA(Gly) + AMP + diphosphate. The sequence is that of Glycine--tRNA ligase beta subunit from Streptococcus agalactiae serotype III (strain NEM316).